Reading from the N-terminus, the 215-residue chain is Pyrrolidone-carboxylate peptidase (215 aa).

Catalysis depends on residues Glu-81, Cys-144, and His-168.

The protein belongs to the peptidase C15 family. In terms of assembly, homotetramer.

Its subcellular location is the cytoplasm. The catalysed reaction is Release of an N-terminal pyroglutamyl group from a polypeptide, the second amino acid generally not being Pro.. Functionally, removes 5-oxoproline from various penultimate amino acid residues except L-proline. The protein is Pyrrolidone-carboxylate peptidase (pcp) of Bacillus subtilis (strain 168).